The sequence spans 363 residues: Ribosomal RNA large subunit methyltransferase M (363 aa).

S-adenosyl-L-methionine is bound by residues S194, 227-230 (CPGG), D246, D266, and D284. K313 (proton acceptor) is an active-site residue.

Belongs to the class I-like SAM-binding methyltransferase superfamily. RNA methyltransferase RlmE family. RlmM subfamily. Monomer.

The protein localises to the cytoplasm. It catalyses the reaction cytidine(2498) in 23S rRNA + S-adenosyl-L-methionine = 2'-O-methylcytidine(2498) in 23S rRNA + S-adenosyl-L-homocysteine + H(+). Functionally, catalyzes the 2'-O-methylation at nucleotide C2498 in 23S rRNA. The chain is Ribosomal RNA large subunit methyltransferase M from Haemophilus influenzae (strain 86-028NP).